The chain runs to 446 residues: Coiled-coil domain-containing protein 112 (446 aa).

2 coiled-coil regions span residues 23 to 116 (LEEL…RKID) and 219 to 400 (ERKK…NVSR). 2 disordered regions span residues 247-277 (NNTPMLFHNKPEDNQKQKEEQRKKQKLAVEA) and 394-430 (VENNVSRDPSRLYKPTKGWEERTKKIGPTGSGPLLHI). The segment covering 255 to 268 (NKPEDNQKQKEEQR) has biased composition (basic and acidic residues).

The protein resides in the cytoplasm. The protein localises to the cytoskeleton. It is found in the microtubule organizing center. Its subcellular location is the centrosome. It localises to the centriolar satellite. This Macaca fascicularis (Crab-eating macaque) protein is Coiled-coil domain-containing protein 112 (CCDC112).